The primary structure comprises 256 residues: 4-hydroxy-tetrahydrodipicolinate reductase (256 aa).

Residues 12–17 (GINGRV), Asp-39, 86–88 (GTT), and 110–113 (AANY) each bind NAD(+). Catalysis depends on His-144, which acts as the Proton donor/acceptor. His-145 serves as a coordination point for (S)-2,3,4,5-tetrahydrodipicolinate. Lys-148 acts as the Proton donor in catalysis. 154–155 (GT) is a binding site for (S)-2,3,4,5-tetrahydrodipicolinate.

This sequence belongs to the DapB family.

The protein localises to the cytoplasm. The enzyme catalyses (S)-2,3,4,5-tetrahydrodipicolinate + NAD(+) + H2O = (2S,4S)-4-hydroxy-2,3,4,5-tetrahydrodipicolinate + NADH + H(+). The catalysed reaction is (S)-2,3,4,5-tetrahydrodipicolinate + NADP(+) + H2O = (2S,4S)-4-hydroxy-2,3,4,5-tetrahydrodipicolinate + NADPH + H(+). It functions in the pathway amino-acid biosynthesis; L-lysine biosynthesis via DAP pathway; (S)-tetrahydrodipicolinate from L-aspartate: step 4/4. Its function is as follows. Catalyzes the conversion of 4-hydroxy-tetrahydrodipicolinate (HTPA) to tetrahydrodipicolinate. This chain is 4-hydroxy-tetrahydrodipicolinate reductase, found in Gluconacetobacter diazotrophicus (strain ATCC 49037 / DSM 5601 / CCUG 37298 / CIP 103539 / LMG 7603 / PAl5).